A 130-amino-acid chain; its full sequence is Calcitonin gene-related peptide 2 (130 aa).

The signal sequence occupies residues 1–26 (MDFWKFFPFLALSTIWVLCLASSLQA). The propeptide occupies 27 to 82 (APFRSALESSLDLGTLGDQEKHLLLAALMQDYEQMKARKLEQEEQETKGSRVTAQK). A disulfide bond links cysteine 85 and cysteine 90. The residue at position 120 (phenylalanine 120) is a Phenylalanine amide. A propeptide spanning residues 127 to 130 (DLQA) is cleaved from the precursor.

The protein belongs to the calcitonin family. As to expression, detected in nerve cells of cerebrum, hippocampus and pons/midbrain in newborns, and only in nerve cells of pons/midbrain in adult.

Its subcellular location is the secreted. Functionally, CALCB/CGRP2 is a peptide hormone that induces vasodilation mediated by the CALCRL-RAMP1 receptor complex. Dilates a variety of vessels including the coronary, cerebral and systemic vasculature. Its abundance in the CNS also points toward a neurotransmitter or neuromodulator role. In Mus musculus (Mouse), this protein is Calcitonin gene-related peptide 2.